A 384-amino-acid chain; its full sequence is Cytochrome b (384 aa).

4 consecutive transmembrane segments (helical) span residues 33–53 (YGSLLFLCLIIQIATGLFLAM), 77–98 (WLIRNMHANGASFFFICLYLHI), 113–133 (WNVGVILFLLVMMTAFVGYVL), and 178–198 (FFAFHFLFPFVIAAAAVIHLL). Heme b contacts are provided by H83 and H97. Residues H182 and H196 each coordinate heme b. Residue H201 participates in a ubiquinone binding. 4 consecutive transmembrane segments (helical) span residues 226-246 (YKDLLGFALMLLALTSLALFT), 288-308 (LGGVLALLFSILVLMVVPILH), 320-340 (LSQMLFWTLVADVLILTWIGG), and 347-367 (FIIIGQVASVLYFMLFLVLMP).

This sequence belongs to the cytochrome b family. As to quaternary structure, the cytochrome bc1 complex contains 3 respiratory subunits (MT-CYB, CYC1 and UQCRFS1), 2 core proteins (UQCRC1 and UQCRC2) and probably 6 low-molecular weight proteins. Requires heme b as cofactor.

It is found in the mitochondrion inner membrane. Its function is as follows. Component of the ubiquinol-cytochrome c reductase complex (complex III or cytochrome b-c1 complex) that is part of the mitochondrial respiratory chain. The b-c1 complex mediates electron transfer from ubiquinol to cytochrome c. Contributes to the generation of a proton gradient across the mitochondrial membrane that is then used for ATP synthesis. The polypeptide is Cytochrome b (mt-cyb) (Anoplogaster cornuta (Common fangtooth)).